The chain runs to 54 residues: Ovomucoid (54 aa).

Positions 4 to 54 (VDCSDYPKPVCTLEDMPLCGSDNITYHNKCYFCNAVAHSNGTLTFSHFGKC) constitute a Kazal-like domain. Intrachain disulfides connect Cys-6-Cys-36, Cys-14-Cys-33, and Cys-22-Cys-54. Asn-43 is a glycosylation site (N-linked (GlcNAc...) asparagine).

Its subcellular location is the secreted. The polypeptide is Ovomucoid (Carpococcyx renauldi (Coral-billed ground-cuckoo)).